Here is a 179-residue protein sequence, read N- to C-terminus: uncharacterized protein (179 aa).

Positions 160–179 (QPIEPNGTQPATETKTPVGV) are disordered. A compositionally biased stretch (polar residues) spans 165–179 (NGTQPATETKTPVGV).

The protein belongs to the Dps family.

This is an uncharacterized protein from Anabaena variabilis.